The chain runs to 460 residues: Serine incorporator 5 (460 aa).

Residues 1–36 are Extracellular-facing; sequence MSARCCAGQLACCCGSAGCALCCGCCPKFRQSRSTR. A helical transmembrane segment spans residues 37 to 57; sequence FMYLFYFTLVIIPCCVMMSPS. Topologically, residues 58-89 are cytoplasmic; the sequence is VMKQMTEHIPFFEDFCKGIKAGDTCENLVGYS. A helical transmembrane segment spans residues 90 to 110; the sequence is AVYRVCFGMACFFFVFCVLTF. Topologically, residues 111-124 are extracellular; that stretch reads KVNNSKSCRASIHN. Residue Asn113 is glycosylated (N-linked (GlcNAc...) asparagine). A helical transmembrane segment spans residues 125 to 145; that stretch reads GFWFFKLLLLGAMCSGAFFIP. At 146 to 156 the chain is on the cytoplasmic side; sequence DQETFLNVWRY. A helical membrane pass occupies residues 157–177; sequence VGAVGSFFFICIQLLLIVEFA. Residues 178-197 are Extracellular-facing; that stretch reads HKWNKNWTAGTVRNKLWYAS. A glycan (N-linked (GlcNAc...) asparagine) is linked at Asn183. Residues 198 to 218 form a helical membrane-spanning segment; that stretch reads LSLALIMYSIAVGGLALMAVF. Residues 219–229 lie on the Cytoplasmic side of the membrane; that stretch reads YTQWDDCMDNK. The helical transmembrane segment at 230 to 250 threads the bilayer; sequence ILLGVHGGLCVLISLAAISPC. Topologically, residues 251-258 are extracellular; that stretch reads VQNRQPHS. Residues 259–279 form a helical membrane-spanning segment; sequence GLLQPGLISCYVTYLTFSALT. Residues 280–309 lie on the Cytoplasmic side of the membrane; it reads SKPEKVVKDEHGKNVTICVPDFGQDFRRDE. Residues 310–330 form a helical membrane-spanning segment; the sequence is SMVTWLGTLLLVVCISYSCLT. Topologically, residues 331 to 390 are extracellular; it reads STTRSSSDALQRRYGAPELEVARCCFCFGPDGEDTEEQQNVKEGPRVIYDEKKGTVYSYS. The helical transmembrane segment at 391–411 threads the bilayer; that stretch reads YFHFVLLLASLYVMMTLTSWF. Over 412-427 the chain is Cytoplasmic; sequence HYENATIETFFVGSWS. The helical transmembrane segment at 428–448 threads the bilayer; that stretch reads IFWVKMASCWMCVLLYLWTLV. Residues 449 to 460 lie on the Extracellular side of the membrane; it reads APLCCPSRQFSV.

This sequence belongs to the TDE1 family. Brain. Expressed at high levels in the white matter and the oligodendroglial cells of the brain. Expressed at low levels in the liver.

Its subcellular location is the cell membrane. The enzyme catalyses a 1,2-diacyl-sn-glycero-3-phospho-L-serine(in) = a 1,2-diacyl-sn-glycero-3-phospho-L-serine(out). It catalyses the reaction a 1,2-diacyl-sn-glycero-3-phosphocholine(in) = a 1,2-diacyl-sn-glycero-3-phosphocholine(out). The catalysed reaction is a 1,2-diacyl-sn-glycero-3-phosphoethanolamine(in) = a 1,2-diacyl-sn-glycero-3-phosphoethanolamine(out). Its function is as follows. Restriction factor required to restrict infectivity of gammaretroviruses: acts by inhibiting an early step of viral infection. Impairs the penetration of the viral particle into the cytoplasm. Non-ATP-dependent, non-specific lipid transporter for phosphatidylserine, phosphatidylcholine, and phosphatidylethanolamine. Functions as a scramblase that flips lipids in both directions across the membrane. Phospholipid scrambling results in gammaretroviral surface exposure of phosphatidylserine and loss of membrane asymmetry, which leads to loss of infectivity. Enhances the incorporation of serine into phosphatidylserine and sphingolipids. May play a role in providing serine molecules for the formation of myelin glycosphingolipids in oligodendrocytes. The chain is Serine incorporator 5 (Serinc5) from Rattus norvegicus (Rat).